The chain runs to 130 residues: Small ribosomal subunit protein uS8 (130 aa).

This sequence belongs to the universal ribosomal protein uS8 family. In terms of assembly, component of the 40S ribosomal subunit. Part of the small subunit (SSU) processome, composed of more than 70 proteins and the RNA chaperone small nucleolar RNA (snoRNA) U3.

It localises to the cytoplasm. Its subcellular location is the nucleus. The protein resides in the nucleolus. Its function is as follows. Component of the small ribosomal subunit. Part of the small subunit (SSU) processome, first precursor of the small eukaryotic ribosomal subunit. During the assembly of the SSU processome in the nucleolus, many ribosome biogenesis factors, an RNA chaperone and ribosomal proteins associate with the nascent pre-rRNA and work in concert to generate RNA folding, modifications, rearrangements and cleavage as well as targeted degradation of pre-ribosomal RNA by the RNA exosome. Required for erythropoiesis during embryonic development. This Danio rerio (Zebrafish) protein is Small ribosomal subunit protein uS8.